The sequence spans 49 residues: Large ribosomal subunit protein bL33B (49 aa).

Belongs to the bacterial ribosomal protein bL33 family.

The polypeptide is Large ribosomal subunit protein bL33B (Limosilactobacillus fermentum (strain NBRC 3956 / LMG 18251) (Lactobacillus fermentum)).